Here is an 887-residue protein sequence, read N- to C-terminus: Microsomal triglyceride transfer protein large subunit (887 aa).

The signal sequence occupies residues 1–11 (FLCFISSYSAS). The Vitellogenin domain maps to 21–655 (LNNDRLYKLT…YIEKTPLHGI (635 aa)). Cys167 and Cys187 are oxidised to a cystine.

Heterodimer; heterodimerizes with the protein disulfide isomerase (P4HB/PDI). Interacts with APOB. Interacts with PRAP1.

The protein resides in the endoplasmic reticulum. The protein localises to the golgi apparatus. The catalysed reaction is a 1,2-diacyl-sn-glycero-3-phosphocholine(in) = a 1,2-diacyl-sn-glycero-3-phosphocholine(out). It carries out the reaction a 1,2-diacyl-sn-glycero-3-phosphoethanolamine(in) = a 1,2-diacyl-sn-glycero-3-phosphoethanolamine(out). It catalyses the reaction a cholesterol ester(in) = a cholesterol ester(out). The enzyme catalyses a triacyl-sn-glycerol(in) = a triacyl-sn-glycerol(out). In terms of biological role, catalyzes the transport of triglyceride, cholesteryl ester, and phospholipid between phospholipid surfaces. Required for the assembly and secretion of plasma lipoproteins that contain apolipoprotein B. May be involved in regulating cholesteryl ester biosynthesis in cells that produce lipoproteins. In Bos taurus (Bovine), this protein is Microsomal triglyceride transfer protein large subunit (MTTP).